A 292-amino-acid polypeptide reads, in one-letter code: Acetyl-coenzyme A carboxylase carboxyl transferase subunit beta (292 aa).

Positions 36–292 (MWSKCEKCAK…LLRMHEVDYE (257 aa)) constitute a CoA carboxyltransferase N-terminal domain. Positions 40, 43, 59, and 62 each coordinate Zn(2+). A C4-type zinc finger spans residues 40-62 (CEKCAKILYTEDLRENFNVCPNC).

The protein belongs to the AccD/PCCB family. As to quaternary structure, acetyl-CoA carboxylase is a heterohexamer composed of biotin carboxyl carrier protein (AccB), biotin carboxylase (AccC) and two subunits each of ACCase subunit alpha (AccA) and ACCase subunit beta (AccD). Requires Zn(2+) as cofactor.

It is found in the cytoplasm. It carries out the reaction N(6)-carboxybiotinyl-L-lysyl-[protein] + acetyl-CoA = N(6)-biotinyl-L-lysyl-[protein] + malonyl-CoA. Its pathway is lipid metabolism; malonyl-CoA biosynthesis; malonyl-CoA from acetyl-CoA: step 1/1. Its function is as follows. Component of the acetyl coenzyme A carboxylase (ACC) complex. Biotin carboxylase (BC) catalyzes the carboxylation of biotin on its carrier protein (BCCP) and then the CO(2) group is transferred by the transcarboxylase to acetyl-CoA to form malonyl-CoA. The protein is Acetyl-coenzyme A carboxylase carboxyl transferase subunit beta of Clostridium perfringens (strain ATCC 13124 / DSM 756 / JCM 1290 / NCIMB 6125 / NCTC 8237 / Type A).